A 492-amino-acid chain; its full sequence is Cysteine--tRNA ligase (492 aa).

Cys29 is a Zn(2+) binding site. The 'HIGH' region signature appears at 31-41 (PTVYDYAHIGN). The Zn(2+) site is built by Cys222, His247, and Glu251. Positions 279–283 (KMSKS) match the 'KMSKS' region motif. Residue Lys282 participates in ATP binding.

The protein belongs to the class-I aminoacyl-tRNA synthetase family. In terms of assembly, monomer. Zn(2+) serves as cofactor.

It localises to the cytoplasm. It catalyses the reaction tRNA(Cys) + L-cysteine + ATP = L-cysteinyl-tRNA(Cys) + AMP + diphosphate. The sequence is that of Cysteine--tRNA ligase from Treponema denticola (strain ATCC 35405 / DSM 14222 / CIP 103919 / JCM 8153 / KCTC 15104).